Here is an 89-residue protein sequence, read N- to C-terminus: Neuropeptide S (89 aa).

A signal peptide spans methionine 1–cysteine 23. A propeptide spanning residues histidine 24–methionine 67 is cleaved from the precursor.

The protein localises to the secreted. Modulates arousal and anxiety. May play an important anorexigenic role. Binds to its receptor NPSR1 with nanomolar affinity to increase intracellular calcium concentrations. This is Neuropeptide S (NPS) from Bos taurus (Bovine).